A 93-amino-acid chain; its full sequence is MPQHKSAEKRVRQSKRRNARNRVHKAEMKKLVKTVKGLIEKSAEKEEVENAYRAAIQKLDRMAVKGYLHKNNASNKKSKLSKLVNRFSKGDAA.

A compositionally biased stretch (basic and acidic residues) spans 1–11 (MPQHKSAEKRV). The segment at 1–23 (MPQHKSAEKRVRQSKRRNARNRV) is disordered. Residues 12–23 (RQSKRRNARNRV) are compositionally biased toward basic residues.

It belongs to the bacterial ribosomal protein bS20 family.

Binds directly to 16S ribosomal RNA. The chain is Small ribosomal subunit protein bS20 from Chloroherpeton thalassium (strain ATCC 35110 / GB-78).